The following is a 205-amino-acid chain: uncharacterized protein (205 aa).

Residues 10–75 (QDLLSAVDQQ…AANLMTVMTD (66 aa)) adopt a coiled-coil conformation. The tract at residues 111 to 138 (PLSNTNNEQTSPPASGKTSETPKKNPTN) is disordered. Residues 112-138 (LSNTNNEQTSPPASGKTSETPKKNPTN) show a composition bias toward polar residues.

The protein belongs to the asfivirus K205R family.

It is found in the host cytoplasm. Its function is as follows. Induces host endoplasmic reticulum stress and consequently activates autophagy and NF-kappa-B signaling pathway. In turn, may induce autophagy-mediated STING1 degradation and innate immune evasion. This is an uncharacterized protein from Ornithodoros (relapsing fever ticks).